We begin with the raw amino-acid sequence, 267 residues long: Putative carboxymethylenebutenolidase (267 aa).

Catalysis depends on residues Cys137, Asp194, and His226.

Belongs to the dienelactone hydrolase family.

The catalysed reaction is 2-(5-oxo-2,5-dihydrofuran-2-ylidene)acetate + H2O = 4-oxohex-2-enedioate + H(+). The polypeptide is Putative carboxymethylenebutenolidase (Yersinia pestis).